The primary structure comprises 145 residues: Large ribosomal subunit protein uL13 (145 aa).

This sequence belongs to the universal ribosomal protein uL13 family. Part of the 50S ribosomal subunit.

Functionally, this protein is one of the early assembly proteins of the 50S ribosomal subunit, although it is not seen to bind rRNA by itself. It is important during the early stages of 50S assembly. The polypeptide is Large ribosomal subunit protein uL13 (Geobacillus kaustophilus (strain HTA426)).